A 489-amino-acid chain; its full sequence is Betaine aldehyde dehydrogenase (489 aa).

Positions 26 and 93 each coordinate K(+). Residue 150–152 coordinates NAD(+); sequence GAW. The Charge relay system role is filled by Lys-162. 176–179 is a binding site for NAD(+); sequence KPSE. Residue Val-180 participates in K(+) binding. 229-232 provides a ligand contact to NAD(+); the sequence is GVET. Residue Leu-245 coordinates K(+). Catalysis depends on Glu-251, which acts as the Proton acceptor. Residues Gly-253, Cys-285, and Glu-386 each coordinate NAD(+). The active-site Nucleophile is Cys-285. Position 285 is a cysteine sulfenic acid (-SOH) (Cys-285). Positions 456 and 459 each coordinate K(+). The active-site Charge relay system is the Glu-463.

This sequence belongs to the aldehyde dehydrogenase family. As to quaternary structure, dimer of dimers. Requires K(+) as cofactor.

The catalysed reaction is betaine aldehyde + NAD(+) + H2O = glycine betaine + NADH + 2 H(+). The protein operates within amine and polyamine biosynthesis; betaine biosynthesis via choline pathway; betaine from betaine aldehyde: step 1/1. In terms of biological role, involved in the biosynthesis of the osmoprotectant glycine betaine. Catalyzes the irreversible oxidation of betaine aldehyde to the corresponding acid. This is Betaine aldehyde dehydrogenase from Burkholderia cenocepacia (strain ATCC BAA-245 / DSM 16553 / LMG 16656 / NCTC 13227 / J2315 / CF5610) (Burkholderia cepacia (strain J2315)).